A 35-amino-acid polypeptide reads, in one-letter code: Leukocyte cysteine proteinase inhibitor 2 (35 aa).

Positions 1-35 (LAGGLTEPRPADTEIQEIANKVKPQLEEKTNKKYD) are disordered. Positions 24–35 (PQLEEKTNKKYD) are enriched in basic and acidic residues.

The protein belongs to the cystatin family.

The protein localises to the cytoplasm. Potent inhibitor of cathepsins L and S, and papain. The chain is Leukocyte cysteine proteinase inhibitor 2 from Sus scrofa (Pig).